We begin with the raw amino-acid sequence, 302 residues long: Phospho-N-acetylmuramoyl-pentapeptide-transferase (302 aa).

The next 10 helical transmembrane spans lie at 1–21 (MIAA…KLFR), 42–62 (GTPT…GMIS), 67–87 (MVLL…FLSV), 95–115 (LKTY…LLLI), 123–143 (FFGS…LVIV), 154–174 (GLDG…WFFL), 178–198 (GVSE…LVFN), 204–224 (IFMG…VSVL), 229–249 (FYLV…ILQV), and 279–299 (IVAV…EIFG).

This sequence belongs to the glycosyltransferase 4 family. MraY subfamily. The cofactor is Mg(2+).

It is found in the cell inner membrane. It catalyses the reaction UDP-N-acetyl-alpha-D-muramoyl-L-alanyl-gamma-D-glutamyl-meso-2,6-diaminopimeloyl-D-alanyl-D-alanine + di-trans,octa-cis-undecaprenyl phosphate = di-trans,octa-cis-undecaprenyl diphospho-N-acetyl-alpha-D-muramoyl-L-alanyl-D-glutamyl-meso-2,6-diaminopimeloyl-D-alanyl-D-alanine + UMP. Its pathway is cell wall biogenesis; peptidoglycan biosynthesis. In terms of biological role, catalyzes the initial step of the lipid cycle reactions in the biosynthesis of the cell wall peptidoglycan: transfers peptidoglycan precursor phospho-MurNAc-pentapeptide from UDP-MurNAc-pentapeptide onto the lipid carrier undecaprenyl phosphate, yielding undecaprenyl-pyrophosphoryl-MurNAc-pentapeptide, known as lipid I. The sequence is that of Phospho-N-acetylmuramoyl-pentapeptide-transferase from Thermotoga maritima (strain ATCC 43589 / DSM 3109 / JCM 10099 / NBRC 100826 / MSB8).